Here is a 207-residue protein sequence, read N- to C-terminus: RNA chaperone ProQ (207 aa).

Residues 100–156 (TLAESKAKVQARRKEQAQKARDEEKSKPKTKKAPQQRRANKPQAQKPAKQPVETRAL) are disordered. Over residues 111–126 (RRKEQAQKARDEEKSK) the composition is skewed to basic and acidic residues. The span at 127–139 (PKTKKAPQQRRAN) shows a compositional bias: basic residues.

It belongs to the ProQ family.

It localises to the cytoplasm. RNA chaperone with significant RNA binding, RNA strand exchange and RNA duplexing activities. The sequence is that of RNA chaperone ProQ from Vibrio vulnificus (strain CMCP6).